Here is a 191-residue protein sequence, read N- to C-terminus: Apoptosis regulator BHRF1 (191 aa).

The interval 1–18 (MAYSTREILLALCIRDSR) is interaction with host VRK2. N22 carries an N-linked (GlcNAc...) asparagine; by host glycan. The BH1 motif lies at 89-109 (EIFHRGDPSLGRALAWMAWCM). The interaction with host VRK2 stretch occupies residues 89–142 (EIFHRGDPSLGRALAWMAWCMHACRTLCCNQSTPYYVVDLSVRGMLEASEGLDG). An N-linked (GlcNAc...) asparagine; by host glycan is attached at N118. A BH2 motif is present at residues 142-157 (GWIHQQGGWSTLIEDN). A helical membrane pass occupies residues 166 to 186 (WTLFLAGLTLSLLVICSYLFI).

The protein belongs to the Bcl-2 family. Interacts with isoform 1 of host VRK2; this interaction is involved in protecting cells from apoptosis. Interacts with host PRA1; this interaction seems to modulate BHRF1 anti-apoptotic activity. Interacts with host BCL2L11. Interacts with host BAD and BBC3. Interacts with BALF1; BALF1 acting as a negative regulator of the survival function of BHRF1. Interacts with host BECN1.

The protein localises to the host membrane. It is found in the host mitochondrion. Its function is as follows. Prevents premature death of the host cell during virus production, which would otherwise reduce the amount of progeny virus. Acts as a host B-cell leukemia/lymphoma 2 (Bcl-2) homolog, and interacts with pro-apoptotic proteins to prevent mitochondria permeabilization, release of cytochrome c and subsequent apoptosis of the host cell. In addition, plays a role in the inhibiton of host BECN1-mediated starvation-induced autophagy without affecting basal levels of autophagy. The protein is Apoptosis regulator BHRF1 of Epstein-Barr virus (strain GD1) (HHV-4).